The sequence spans 250 residues: Probable transcriptional regulatory protein Paes_0496 (250 aa).

Belongs to the TACO1 family.

It localises to the cytoplasm. The polypeptide is Probable transcriptional regulatory protein Paes_0496 (Prosthecochloris aestuarii (strain DSM 271 / SK 413)).